A 288-amino-acid polypeptide reads, in one-letter code: Probable ketoamine kinase PM0587 (288 aa).

Glutamate 92–leucine 94 contributes to the ATP binding site.

The protein belongs to the fructosamine kinase family.

Its function is as follows. Ketoamine kinase that phosphorylates ketoamines on the third carbon of the sugar moiety to generate ketoamine 3-phosphate. This chain is Probable ketoamine kinase PM0587, found in Pasteurella multocida (strain Pm70).